The following is a 1488-amino-acid chain: MSESPSEPRAKRQRVDKNGRFAAMERLRQLKGTKNKCKVEDQVDDVYDVVDEREYAKRAQEKYGDDWIEEDGTGYAEDLRDFFEDEDEYSDGEEDRKDSKKKKGVAPNSKKRPRENEKPVTGKASIKNLFSNAVPKKMDVKTSVKDDDILADILGEIKEEPAATSEKAEKVIAPAKISVTSRKFDAAAAKEYMNSFLNNIKVQEQERKKAEASSDNEMLERILKPKAAVPNTKVAFFSSPTIKKEPMPEKTPAKKATEDPFSDNEMDFSCLDDDENQFDVEKTQQTEKVSQTKTAAEKTSQSKVAEKSAPKKETTGSPKESESEDISRLLNNWESICQMDDDFEKSVLTTEQDSTISSDQQLRFWYWEAYEDPVKMPGEVFLFGRTADGKSVCLRVQNINRVLYLLPRQFLLDPISKEPTKQKVTVADIYKEFDSEVANQLKLEFFRSRKVTKSFAHHAIGIEVPQSCDYLEVHYDGKKPLPNLSADKKYNSIAHIFGATTNALERFLLDRKIKGPCWLQVTGFKVSPTPMSWCNTEVTLTEPKNVELVQDKGKPAPPPPLTLLSLNVRTSMNPKTSRNEICMISMLTHNRFHIDRPAPQPAFNRHMCALTRPAVVSWPLDLNFEMAKYKSTTVHKHDSERALLSWFLAQYQKIDADLIVTFDSMDCQLNVITDQIVALKIPQWSRMGRLRLSQSFGKRLLEHFVGRMVCDVKRSAEECIRARSYDLQTLCKQVLKLKESERMEVNADDLLEMYEKGESITKLISLTMQDNSYLLRLMCELNIMPLALQITNICGNTMTRTLQGGRSERNEFLLLHAFHEKNYIVPDKKPVSKRSGAGDTDATLSGADATMQTKKKAAYAGGLVLEPMRGLYEKYVLLMDFNSLYPSIIQEYNICFTTVQQPVDADELPTLPDSKTEPGILPLQLKRLVESRKEVKKLMAAPDLSPELQMQYHIRQMALKLTANSMYGCLGFAHSRFFAQHLAALVTHKGREILTNTQQLVQKMNYDVVYGDTDSLMINTNITDYDQVYKIGHNIKQSVNKLYKQLELDIDGVFGCLLLLKKKKYAAIKLSKDSKGNLRREQEHKGLDIVRRDWSQLAVMVGKAVLDEVLSEKPLEEKLDAVHAQLEKIKTQIAEGVVPLPLFVITKQLTRTPQEYANSASLPHVQVALRMNRERNRRYKKGDMVDYVICLDGTTNAAMQRAYHLDELKTSEDKKLQLDTNYYLGHQIHPVVTRMVEVLEGTDASRIAECLGMDPTKFRQNAQRTQRENTEQSEGESLLKTTLQLYRLCEPFRFQCVTCKTEQLMASAYRPGPSNSHIAVLQQCAKSECQTAPIQYLASVRNQLQLSMRQYVQRFYKNWLVCDHPDCNFNTRTHSLRKKSHRPLCQKCRSGSLLRQYTERDLYNQLCYLRFMFDLGKQTLQQKPTLTPELEQAYQLLYETVDQQLQSSSYVIISLSKLFARSLAQMSLQPSVAQPQIEAIPSALADVV.

Disordered regions lie at residues 1-22, 79-124, and 236-325; these read MSES…GRFA, LRDF…TGKA, and FFSS…ESED. Acidic residues predominate over residues 83–93; that stretch reads FEDEDEYSDGE. Residues 96 to 103 carry the Nuclear localization signal motif; that stretch reads RKDSKKKK. The segment covering 99 to 113 has biased composition (basic residues); the sequence is SKKKKGVAPNSKKRP. Ser-239 carries the post-translational modification Phosphoserine. Positions 242–258 are enriched in basic and acidic residues; sequence IKKEPMPEKTPAKKATE. A compositionally biased stretch (acidic residues) spans 260–278; the sequence is PFSDNEMDFSCLDDDENQF. Phosphoserine is present on residues Ser-262 and Ser-269. Positions 286 to 303 are enriched in polar residues; it reads TEKVSQTKTAAEKTSQSK. Basic and acidic residues predominate over residues 304 to 325; that stretch reads VAEKSAPKKETTGSPKESESED. A Phosphothreonine modification is found at Thr-314. Ser-317 carries the phosphoserine modification. Residues 638-758 are contains conserved residues essential for 3' -&gt; 5' exonuclease activities; it reads DSERALLSWF…DLLEMYEKGE (121 aa). DNA-binding stretches follow at residues 675–734 and 1255–1380; these read QIVA…CKQV and PTKF…RKKS. The Zn(2+) site is built by Cys-1296, Cys-1299, Cys-1324, Cys-1329, Cys-1362, Cys-1367, Cys-1385, and Cys-1388. A CysA-type zinc finger spans residues 1296–1327; the sequence is CVTCKTEQLMASAYRPGPSNSHIAVLQQCAKS. The CysB motif signature appears at 1362 to 1388; it reads CDHPDCNFNTRTHSLRKKSHRPLCQKC.

The protein belongs to the DNA polymerase type-B family. In terms of assembly, component of the alpha DNA polymerase complex (also known as the alpha DNA polymerase-primase complex) consisting of four subunits: the catalytic subunit PolA1, the regulatory subunit PolA2, and the primase complex subunits Prim1 and Prim2 respectively. PolA1 associates with the DNA primase complex before association with PolA2. Interacts with Dpit47; the interaction inhibits the activity of the DNA polymerase and occurs only in proliferating cells but not in quiescent cells. In terms of processing, in embryos, a cleaved form of 130 kDa is produced up to cycle 14 and then disappears. In terms of tissue distribution, expressed in embryos (at protein level).

It is found in the nucleus. The catalysed reaction is DNA(n) + a 2'-deoxyribonucleoside 5'-triphosphate = DNA(n+1) + diphosphate. With respect to regulation, inhibited by N2-(p-n-butylphenyl) deoxyguanosine 5'-triphosphate and N2-(p-n-butylphenyl) deoxyadenosine 5'-triphosphate. DNA synthesis is not inhibited by fungal toxin alpha-amaitin. The 3'-5' exonuclease activity is inhibited by 10mM dGMP. Catalytic subunit of the DNA polymerase alpha complex (also known as the alpha DNA polymerase-primase complex) which plays an essential role in the initiation of DNA synthesis. During the S phase of the cell cycle, the DNA polymerase alpha complex (composed of a catalytic subunit PolA1, an accessory subunit PolA2 and two primase subunits, the catalytic subunit Prim1 and the regulatory subunit Prim2) is recruited to DNA at the replicative forks. The primase subunit of the polymerase alpha complex initiates DNA synthesis by oligomerising short RNA primers on both leading and lagging strands. These primers are initially extended by the polymerase alpha catalytic subunit and subsequently transferred to polymerase delta and polymerase epsilon for processive synthesis on the lagging and leading strand, respectively. In addition to polymerase activity, exhibits 3' to 5' exonuclease activity. The polypeptide is DNA polymerase alpha catalytic subunit (Drosophila melanogaster (Fruit fly)).